Consider the following 244-residue polypeptide: Triosephosphate isomerase (244 aa).

9–11 is a substrate binding site; sequence NWK. The active-site Electrophile is His-93. The active-site Proton acceptor is the Glu-161. Residues Gly-167, Ser-206, and 227–228 each bind substrate; that span reads GG.

The protein belongs to the triosephosphate isomerase family. Homodimer.

It localises to the cytoplasm. It carries out the reaction D-glyceraldehyde 3-phosphate = dihydroxyacetone phosphate. The protein operates within carbohydrate biosynthesis; gluconeogenesis. It functions in the pathway carbohydrate degradation; glycolysis; D-glyceraldehyde 3-phosphate from glycerone phosphate: step 1/1. Its function is as follows. Involved in the gluconeogenesis. Catalyzes stereospecifically the conversion of dihydroxyacetone phosphate (DHAP) to D-glyceraldehyde-3-phosphate (G3P). This is Triosephosphate isomerase from Deinococcus geothermalis (strain DSM 11300 / CIP 105573 / AG-3a).